A 425-amino-acid polypeptide reads, in one-letter code: TRAF family member-associated NF-kappa-B activator (425 aa).

Met1 is subject to N-acetylmethionine. The interval 1 to 31 (MDKNIGEQLNKAYEAFRQACMDRDSAVKELQ) is necessary for interaction with ZC3H12A. Residues 22 to 62 (DRDSAVKELQQKTENYEQRIREQQEQLSLQQTIIDKLKSQL) are a coiled coil. A necessary for interaction with TRAF6 region spans residues 70-191 (DNNYGCVPLL…QCTDKTDKQE (122 aa)). Ser126 and Ser129 each carry phosphoserine. An interaction with TBK1 and IKBKE region spans residues 133–172 (HERGNIEKTFWDLKEEFHKICMLAKAQKDHLSKLNIPDTA). Residues 172 to 191 (ATETQCSVPIQCTDKTDKQE) are TRAF family member interaction. Ser178 and Ser208 each carry phosphoserine. Phosphothreonine is present on Thr213. Phosphoserine occurs at positions 225, 228, 341, 354, and 357. A UBZ1-type zinc finger spans residues 393 to 420 (PRVCEFCQAVFPPSITSRGDFLRHLNSH). Cys396, Cys399, His416, and His420 together coordinate Zn(2+).

As to quaternary structure, homodimer. Found in a deubiquitination complex with TANK, USP10 and ZC3H12A; this complex inhibits genotoxic stress- or interleukin-1-beta-mediated NF-kappaB activation by promoting IKBKG or TRAF6 deubiquitination. Interacts with IKBKG; this interaction increases in response to DNA damage. Interacts with TRAF6; this interaction increases in response to DNA damage and recruits USP10 to the ubiquitinated TRAF6. Interacts with USP10; this interaction increases in response to DNA damage. Interacts with ZC3H12A; this interaction increases in response to DNA damage. Interacts with TBK1. Interacts with IKBKE. Also interacts with TRAF1, TRAF2, and TRAF3 by binding to their TRAF-C domains; the interaction with TRAF2 is disrupted by the phosphorylation of TANK by IKBKE. Interacts more strongly with TRAF1 and TRAF2 than TRAF3. Interacts with IKBKG; the interaction is enhanced by IKBKE and TBK1. Part of a ternary complex consisting of TANK, IKBKB and IKBKG. In terms of assembly, (Microbial infection) Interacts with vaccinia virus protein C6. (Microbial infection) Interacts with Seneca Valley virus protease 3C; this interaction allows the cleavage of TANK and subsequent suppression of host innate immunity. Post-translationally, phosphorylated by IKBKE. (Microbial infection) Cleaved by encephalomyocarditis virus (EMCV) protease 3C. This cleavage allows the virus to disrupt the TANK-TBK1-IKKepsilon-IRF3 complex, thereby inhibiting the induction of the IFN-beta signal pathway. In terms of processing, (Microbial infection) Cleaved by Seneca Valley virus protease 3C allowing the virus to suppress interferon type-I through both RIG-I and Toll-like receptor-dependent pathways. In terms of tissue distribution, ubiquitous.

It localises to the cytoplasm. Adapter protein involved in I-kappa-B-kinase (IKK) regulation which constitutively binds TBK1 and IKBKE playing a role in antiviral innate immunity. Acts as a regulator of TRAF function by maintaining them in a latent state. Blocks TRAF2 binding to LMP1 and inhibits LMP1-mediated NF-kappa-B activation. Negatively regulates NF-kappaB signaling and cell survival upon DNA damage. Plays a role as an adapter to assemble ZC3H12A, USP10 in a deubiquitination complex which plays a negative feedback response to attenuate NF-kappaB activation through the deubiquitination of IKBKG or TRAF6 in response to interleukin-1-beta (IL1B) stimulation or upon DNA damage. Promotes UBP10-induced deubiquitination of TRAF6 in response to DNA damage. May control negatively TRAF2-mediated NF-kappa-B activation signaled by CD40, TNFR1 and TNFR2. In Homo sapiens (Human), this protein is TRAF family member-associated NF-kappa-B activator (TANK).